The sequence spans 215 residues: Cytochrome b6 (215 aa).

A helical membrane pass occupies residues 32-52; the sequence is IFYCLGGITLTCFLVQVATGF. Heme c is bound at residue C35. H86 and H100 together coordinate heme b. 3 helical membrane passes run 90-110, 116-136, and 186-206; these read ASMM…TGGF, LTWV…VTGY, and LHTF…FLMI. Heme b contacts are provided by H187 and H202.

Belongs to the cytochrome b family. PetB subfamily. The 4 large subunits of the cytochrome b6-f complex are cytochrome b6, subunit IV (17 kDa polypeptide, PetD), cytochrome f and the Rieske protein, while the 4 small subunits are PetG, PetL, PetM and PetN. The complex functions as a dimer. It depends on heme b as a cofactor. Heme c serves as cofactor.

The protein resides in the plastid. It is found in the chloroplast thylakoid membrane. Its function is as follows. Component of the cytochrome b6-f complex, which mediates electron transfer between photosystem II (PSII) and photosystem I (PSI), cyclic electron flow around PSI, and state transitions. This Hordeum vulgare (Barley) protein is Cytochrome b6.